A 345-amino-acid polypeptide reads, in one-letter code: 3-isopropylmalate dehydrogenase (345 aa).

74–87 contributes to the NAD(+) binding site; it reads GPKWDGLPRKIRPE. Positions 94, 104, 132, and 217 each coordinate substrate. Aspartate 217, aspartate 241, and aspartate 245 together coordinate Mg(2+). Position 274 to 286 (274 to 286) interacts with NAD(+); that stretch reads GSAPDIAGKGLAN.

Belongs to the isocitrate and isopropylmalate dehydrogenases family. LeuB type 1 subfamily. As to quaternary structure, homodimer. Mg(2+) is required as a cofactor. Mn(2+) serves as cofactor.

Its subcellular location is the cytoplasm. The enzyme catalyses (2R,3S)-3-isopropylmalate + NAD(+) = 4-methyl-2-oxopentanoate + CO2 + NADH. The protein operates within amino-acid biosynthesis; L-leucine biosynthesis; L-leucine from 3-methyl-2-oxobutanoate: step 3/4. Functionally, catalyzes the oxidation of 3-carboxy-2-hydroxy-4-methylpentanoate (3-isopropylmalate) to 3-carboxy-4-methyl-2-oxopentanoate. The product decarboxylates to 4-methyl-2 oxopentanoate. The sequence is that of 3-isopropylmalate dehydrogenase (leuB) from Thermus thermophilus (strain ATCC BAA-163 / DSM 7039 / HB27).